A 237-amino-acid polypeptide reads, in one-letter code: MGRKSSKAKEKKQKRLEERAAMDAVCAKVDAANRLGDPLEAFPVFKKYDRNGLNVSIECKRVSGLEPATVDWAFDLTKTNMQTMYEQSEWGWKDREKREEMTDDRAWYLIAWENSSVPVAFSHFRFDVECGDEVLYCYEVQLESKVRRKGLGKFLIQILQLMANSTQMKKVMLTVFKHNHGAYQFFREALQFEIDDSSPSMSGCCGEDCSYEILSRRTKFGDSHHSHAGGHCGGCCH.

G2 is lipidated: N-myristoyl glycine. The N-acetyltransferase domain occupies 63–216; that stretch reads SGLEPATVDW…EDCSYEILSR (154 aa). Substrate contacts are provided by residues Y85, 127 to 129, and Y138; that span reads DVE. Acetyl-CoA contacts are provided by residues 140–142 and 148–153; these read VQL and RKGLGK. T174 contacts substrate. N179 is an acetyl-CoA binding site. S197 and Y211 together coordinate substrate.

It belongs to the acetyltransferase family. NAA40 subfamily. Widely expressed; with the highest expression level in liver and the lowest expression in brain (at protein level).

The protein localises to the cytoplasm. Its subcellular location is the nucleus. The enzyme catalyses N-terminal L-seryl-[histone H4] + acetyl-CoA = N-terminal N(alpha)-acetyl-L-seryl-[histone H4] + CoA + H(+). The catalysed reaction is N-terminal L-seryl-[histone H2A] + acetyl-CoA = N-terminal N(alpha)-acetyl-L-seryl-[histone H2A] + CoA + H(+). N-alpha-acetyltransferase that specifically mediates the acetylation of the N-terminal residues of histones H4 and H2A. In contrast to other N-alpha-acetyltransferase, has a very specific selectivity for histones H4 and H2A N-terminus and specifically recognizes the 'Ser-Gly-Arg-Gly sequence'. Acts as a negative regulator of apoptosis. May play a role in hepatic lipid metabolism. The polypeptide is N-alpha-acetyltransferase 40 (Homo sapiens (Human)).